A 251-amino-acid polypeptide reads, in one-letter code: Sugar fermentation stimulation protein homolog (251 aa).

Belongs to the SfsA family.

This chain is Sugar fermentation stimulation protein homolog, found in Symbiobacterium thermophilum (strain DSM 24528 / JCM 14929 / IAM 14863 / T).